A 238-amino-acid chain; its full sequence is NAD(P)H-quinone oxidoreductase subunit K 1 (238 aa).

Residues cysteine 54, cysteine 55, cysteine 119, and cysteine 150 each contribute to the [4Fe-4S] cluster site.

Belongs to the complex I 20 kDa subunit family. NDH-1 can be composed of about 15 different subunits; different subcomplexes with different compositions have been identified which probably have different functions. [4Fe-4S] cluster is required as a cofactor.

The protein resides in the cellular thylakoid membrane. It carries out the reaction a plastoquinone + NADH + (n+1) H(+)(in) = a plastoquinol + NAD(+) + n H(+)(out). The catalysed reaction is a plastoquinone + NADPH + (n+1) H(+)(in) = a plastoquinol + NADP(+) + n H(+)(out). NDH-1 shuttles electrons from an unknown electron donor, via FMN and iron-sulfur (Fe-S) centers, to quinones in the respiratory and/or the photosynthetic chain. The immediate electron acceptor for the enzyme in this species is believed to be plastoquinone. Couples the redox reaction to proton translocation, and thus conserves the redox energy in a proton gradient. Cyanobacterial NDH-1 also plays a role in inorganic carbon-concentration. In Cyanothece sp. (strain PCC 7425 / ATCC 29141), this protein is NAD(P)H-quinone oxidoreductase subunit K 1.